A 545-amino-acid chain; its full sequence is Hsk1-interacting molecule 1 (545 aa).

Residues V492–P541 form a DBF4-type zinc finger. Zn(2+) contacts are provided by C499, C502, H512, and H518.

In terms of assembly, associates with hsk1. Interacts with mcm10. In terms of processing, hyperphosphorylated at the G1/S and S-phases of the cell cycle.

The protein resides in the nucleus. Activates hsk1 kinase and is essential for G1/S transition. Has a role in S-phase checkpoint control induced by replication fork blocks after nucleotide deprivation and DNA damage. The polypeptide is Hsk1-interacting molecule 1 (him1) (Schizosaccharomyces pombe (strain 972 / ATCC 24843) (Fission yeast)).